Reading from the N-terminus, the 340-residue chain is Dihydroorotate dehydrogenase (quinone) (340 aa).

Residues 65 to 69 and threonine 89 each bind FMN; that span reads AGLDK. Lysine 69 provides a ligand contact to substrate. 114–118 lines the substrate pocket; sequence NRMGF. FMN is bound by residues asparagine 142 and asparagine 175. Asparagine 175 is a substrate binding site. Residue serine 178 is the Nucleophile of the active site. Substrate is bound at residue asparagine 180. Lysine 220 and threonine 248 together coordinate FMN. 249 to 250 is a binding site for substrate; the sequence is NT. FMN is bound by residues glycine 271, glycine 300, and 321–322; that span reads YT.

The protein belongs to the dihydroorotate dehydrogenase family. Type 2 subfamily. Monomer. It depends on FMN as a cofactor.

The protein resides in the cell membrane. The catalysed reaction is (S)-dihydroorotate + a quinone = orotate + a quinol. It participates in pyrimidine metabolism; UMP biosynthesis via de novo pathway; orotate from (S)-dihydroorotate (quinone route): step 1/1. Its function is as follows. Catalyzes the conversion of dihydroorotate to orotate with quinone as electron acceptor. The protein is Dihydroorotate dehydrogenase (quinone) of Paraburkholderia xenovorans (strain LB400).